Here is a 420-residue protein sequence, read N- to C-terminus: Serine hydroxymethyltransferase (420 aa).

(6S)-5,6,7,8-tetrahydrofolate contacts are provided by residues L121 and 125–127 (GHL). K230 is modified (N6-(pyridoxal phosphate)lysine). 354-356 (SPF) contributes to the (6S)-5,6,7,8-tetrahydrofolate binding site.

This sequence belongs to the SHMT family. In terms of assembly, homodimer. It depends on pyridoxal 5'-phosphate as a cofactor.

The protein localises to the cytoplasm. It catalyses the reaction (6R)-5,10-methylene-5,6,7,8-tetrahydrofolate + glycine + H2O = (6S)-5,6,7,8-tetrahydrofolate + L-serine. The protein operates within one-carbon metabolism; tetrahydrofolate interconversion. It functions in the pathway amino-acid biosynthesis; glycine biosynthesis; glycine from L-serine: step 1/1. Catalyzes the reversible interconversion of serine and glycine with tetrahydrofolate (THF) serving as the one-carbon carrier. This reaction serves as the major source of one-carbon groups required for the biosynthesis of purines, thymidylate, methionine, and other important biomolecules. Also exhibits THF-independent aldolase activity toward beta-hydroxyamino acids, producing glycine and aldehydes, via a retro-aldol mechanism. This Rickettsia africae (strain ESF-5) protein is Serine hydroxymethyltransferase.